A 144-amino-acid polypeptide reads, in one-letter code: 3-hydroxyacyl-[acyl-carrier-protein] dehydratase FabZ (144 aa).

Residue His47 is part of the active site.

Belongs to the thioester dehydratase family. FabZ subfamily.

It is found in the cytoplasm. It catalyses the reaction a (3R)-hydroxyacyl-[ACP] = a (2E)-enoyl-[ACP] + H2O. Involved in unsaturated fatty acids biosynthesis. Catalyzes the dehydration of short chain beta-hydroxyacyl-ACPs and long chain saturated and unsaturated beta-hydroxyacyl-ACPs. This is 3-hydroxyacyl-[acyl-carrier-protein] dehydratase FabZ from Nitrosomonas eutropha (strain DSM 101675 / C91 / Nm57).